Reading from the N-terminus, the 408-residue chain is Retron Ec48 reverse transcriptase (408 aa).

The 227-residue stretch at 43–269 (EELKAIAELP…EPIKVHGLRV (227 aa)) folds into the Reverse transcriptase domain. Residues D137, D216, and D217 each coordinate Mg(2+).

Belongs to the bacterial reverse transcriptase family.

It carries out the reaction DNA(n) + a 2'-deoxyribonucleoside 5'-triphosphate = DNA(n+1) + diphosphate. Its function is as follows. Reverse transcriptase (RT) component of antiviral defense system retron Ec48, composed of a non-coding RNA (ncRNA), this reverse transcriptase (RT) and the following membrane protein. Expression of this retron confers protection against bacteriophages lambda, T2, T4, T5 and T7. At multiplicity of infection (MOI) of 0.02 cultures grow normally when infected with lambda without collapsing, at MOI 2 cultures enter growth stasis. At MOI 3 cell membranes are permeabilized within 15 minutes of infection but do not lyse, suggesting the phage are not able to finish a replication cycle. Antiviral defense is suppressed by mutations that knockout the lambda gam expression or phage T7 gp5.9 expression; both viral genes inhibit host RecBCD. The Ec48 retron may sense the integrity of the RecBCD enzyme; when RecBCD is perturbed by viral proteins the Ec48 effector (the membrane protein) is activated, leading to abortive infection and bacterial growth arrest. Responsible for synthesis of msDNA-Ec48 (a branched molecule with RNA linked by a 2',5'-phosphodiester bond to ssDNA). The retron transcript serves as primer (from a conserved internal G residue) and template for the reaction, and codes for the RT. This Escherichia coli protein is Retron Ec48 reverse transcriptase.